Consider the following 1694-residue polypeptide: Clathrin heavy chain (1694 aa).

A globular terminal domain region spans residues 1–478 (MTNLPIRFQE…HDRKLALSIY (478 aa)). WD40-like repeat stretches follow at residues 23–67 (SIGF…KQMK), 68–107 (TDAAIMNPKEPILALKIGQVLQLISIEQKMQLKSCQMQEP), 108–149 (LEFW…PDLQ), 150–195 (NTEI…QSIE), 196–256 (GHAA…EIGA), 257–300 (SDFP…ISNE), and 301–329 (NIFVTAFEESTNGIIAVNRKGQVLSVSID). Residues 448 to 464 (EKWLTEDKLECSEQLGD) are binding site for the uncoating ATPase, involved in lattice disassembly. The flexible linker stretch occupies residues 479 to 522 (YRANASDKVITLFAETGEFDKIIAYCKKFNYKPDFMFLLQRMAN). Residues 523 to 1694 (ANPMGAADFA…QQNYNQYGGF (1172 aa)) are heavy chain arm. CHCR repeat units lie at residues 537–681 (KEEG…QNLQ), 687–829 (AVSY…QEDY), 834–973 (IMSV…SLID), 980–1125 (LPES…VKEC), 1129–1270 (FIKA…FRLA), 1275–1421 (INII…LLIN), and 1424–1567 (LSVL…NSAF). The tract at residues 1214-1523 (AAKVLYTNIS…YLYKKNNRWA (310 aa)) is involved in binding clathrin light chain. The trimerization stretch occupies residues 1551–1694 (GEELLQYFVD…QQNYNQYGGF (144 aa)). Positions 1610–1640 (KVDQLVDDFKARQKKTEEEKEQQNIESSQYQ) form a coiled coil.

The protein belongs to the clathrin heavy chain family. In terms of assembly, clathrin coats are formed from molecules containing 3 heavy chains and 3 light chains.

Its subcellular location is the cytoplasmic vesicle membrane. It is found in the membrane. It localises to the coated pit. Clathrin is the major protein of the polyhedral coat of coated pits and vesicles. This Dictyostelium discoideum (Social amoeba) protein is Clathrin heavy chain (chcA).